Consider the following 370-residue polypeptide: Ubiquinone biosynthesis O-methyltransferase, mitochondrial (370 aa).

Residues 1-86 (MWGGSKLSSS…SYRLPWTRPY (86 aa)) constitute a mitochondrion transit peptide. Arg125 is a binding site for S-adenosyl-L-methionine. 2 positions are modified to N6-acetyllysine: Lys144 and Lys150. Residues Gly155 and Asp176 each coordinate S-adenosyl-L-methionine. Residue Lys197 is modified to N6-acetyllysine. Position 223 (Ser223) interacts with S-adenosyl-L-methionine. Residues Glu224, Glu227, and His228 each contribute to the Mg(2+) site.

It belongs to the class I-like SAM-binding methyltransferase superfamily. UbiG/COQ3 family. As to quaternary structure, component of a multi-subunit COQ enzyme complex, composed of at least COQ3, COQ4, COQ5, COQ6, COQ7 and COQ9. Mg(2+) serves as cofactor.

Its subcellular location is the mitochondrion inner membrane. It catalyses the reaction 3,4-dihydroxy-5-(all-trans-decaprenyl)benzoate + S-adenosyl-L-methionine = 4-hydroxy-3-methoxy-5-(all-trans-decaprenyl)benzoate + S-adenosyl-L-homocysteine + H(+). The enzyme catalyses a 3-demethylubiquinone + S-adenosyl-L-methionine = a ubiquinone + S-adenosyl-L-homocysteine. It carries out the reaction 3-demethylubiquinol-10 + S-adenosyl-L-methionine = ubiquinol-10 + S-adenosyl-L-homocysteine + H(+). Its pathway is cofactor biosynthesis; ubiquinone biosynthesis. In terms of biological role, O-methyltransferase required for two non-consecutive steps during ubiquinone biosynthesis. Catalyzes the 2 O-methylation of 3,4-dihydroxy-5-(all-trans-decaprenyl)benzoic acid into 4-hydroxy-3-methoxy-5-(all-trans-decaprenyl)benzoic acid. Also catalyzes the last step of ubiquinone biosynthesis by mediating methylation of 3-demethylubiquinone into ubiquinone. Also able to mediate the methylation of 3-demethylubiquinol-10 into ubiquinol-10. The protein is Ubiquinone biosynthesis O-methyltransferase, mitochondrial of Bos taurus (Bovine).